The following is a 165-amino-acid chain: Growth arrest and DNA damage-inducible protein GADD45 alpha (165 aa).

Residue threonine 2 is modified to Phosphothreonine.

Belongs to the GADD45 family. In terms of assembly, interacts with AURKA, PCNA, GADD45GIP1 and MAPK14.

Its subcellular location is the nucleus. In terms of biological role, might affect PCNA interaction with some CDK (cell division protein kinase) complexes; stimulates DNA excision repair in vitro and inhibits entry of cells into S phase. In T-cells, functions as a regulator of p38 MAPKs by inhibiting p88 phosphorylation and activity. The chain is Growth arrest and DNA damage-inducible protein GADD45 alpha (GADD45A) from Bos taurus (Bovine).